Reading from the N-terminus, the 258-residue chain is Glycerol-3-phosphate acyltransferase (258 aa).

6 helical membrane passes run 11 to 31 (IILA…IIIV), 62 to 82 (LVVA…AILL), 94 to 114 (SYFI…YYKF), 124 to 144 (LGLL…IWFI), 160 to 180 (ALII…YFIW), and 212 to 232 (WASG…ILAW).

This sequence belongs to the PlsY family. As to quaternary structure, probably interacts with PlsX.

Its subcellular location is the cell membrane. It carries out the reaction an acyl phosphate + sn-glycerol 3-phosphate = a 1-acyl-sn-glycero-3-phosphate + phosphate. It functions in the pathway lipid metabolism; phospholipid metabolism. Functionally, catalyzes the transfer of an acyl group from acyl-phosphate (acyl-PO(4)) to glycerol-3-phosphate (G3P) to form lysophosphatidic acid (LPA). This enzyme utilizes acyl-phosphate as fatty acyl donor, but not acyl-CoA or acyl-ACP. This chain is Glycerol-3-phosphate acyltransferase, found in Mycoplasma mycoides subsp. mycoides SC (strain CCUG 32753 / NCTC 10114 / PG1).